The chain runs to 199 residues: Recombination protein RecR (199 aa).

The C4-type zinc-finger motif lies at 56 to 71 (CAVCGNIAEETQCRIC). Positions 79–174 (TVICVVEEPK…KVTRLASGLP (96 aa)) constitute a Toprim domain.

The protein belongs to the RecR family.

May play a role in DNA repair. It seems to be involved in an RecBC-independent recombinational process of DNA repair. It may act with RecF and RecO. The polypeptide is Recombination protein RecR (Thermobifida fusca (strain YX)).